A 1049-amino-acid chain; its full sequence is Isoleucine--tRNA ligase (1049 aa).

Positions 48–58 (PYTTGRIHLGT) match the 'HIGH' region motif. The 'KMSKS' region motif lies at 596–600 (KMSKS). Lysine 599 contributes to the ATP binding site.

Belongs to the class-I aminoacyl-tRNA synthetase family. IleS type 2 subfamily. Monomer. The cofactor is Zn(2+).

The protein resides in the cytoplasm. The catalysed reaction is tRNA(Ile) + L-isoleucine + ATP = L-isoleucyl-tRNA(Ile) + AMP + diphosphate. Catalyzes the attachment of isoleucine to tRNA(Ile). As IleRS can inadvertently accommodate and process structurally similar amino acids such as valine, to avoid such errors it has two additional distinct tRNA(Ile)-dependent editing activities. One activity is designated as 'pretransfer' editing and involves the hydrolysis of activated Val-AMP. The other activity is designated 'posttransfer' editing and involves deacylation of mischarged Val-tRNA(Ile). The polypeptide is Isoleucine--tRNA ligase (Methanothrix thermoacetophila (strain DSM 6194 / JCM 14653 / NBRC 101360 / PT) (Methanosaeta thermophila)).